A 303-amino-acid chain; its full sequence is Aquaporin NIP1-2 (303 aa).

Residues Met1 to Cys39 are disordered. Positions Gln17 to Ser26 are enriched in basic and acidic residues. Transmembrane regions (helical) follow at residues Ile66–Val86 and Gly91–Val111. The short motif at Asn123 to Ala125 is the NPA 1 element. The next 3 membrane-spanning stretches (helical) occupy residues Val145–Gly165, Ala188–Thr208, and Ala212–Ala232. The NPA 2 signature appears at Asn241 to Ala243. The chain crosses the membrane as a helical span at residues Tyr255 to Ala275.

This sequence belongs to the MIP/aquaporin (TC 1.A.8) family. NIP (TC 1.A.8.12) subfamily. Expressed in roots and leaves, and at lower levels in anthers.

The protein localises to the membrane. Functionally, aquaporins facilitate the transport of water and small neutral solutes across cell membranes. This Oryza sativa subsp. japonica (Rice) protein is Aquaporin NIP1-2 (NIP1-2).